Reading from the N-terminus, the 338-residue chain is Nicotinate-nucleotide--dimethylbenzimidazole phosphoribosyltransferase (338 aa).

Residue Glu305 is the Proton acceptor of the active site.

The protein belongs to the CobT family.

It carries out the reaction 5,6-dimethylbenzimidazole + nicotinate beta-D-ribonucleotide = alpha-ribazole 5'-phosphate + nicotinate + H(+). The protein operates within nucleoside biosynthesis; alpha-ribazole biosynthesis; alpha-ribazole from 5,6-dimethylbenzimidazole: step 1/2. Catalyzes the synthesis of alpha-ribazole-5'-phosphate from nicotinate mononucleotide (NAMN) and 5,6-dimethylbenzimidazole (DMB). The polypeptide is Nicotinate-nucleotide--dimethylbenzimidazole phosphoribosyltransferase (Sinorhizobium medicae (strain WSM419) (Ensifer medicae)).